A 545-amino-acid polypeptide reads, in one-letter code: uncharacterized protein (545 aa).

The span at 1 to 10 shows a compositional bias: basic residues; that stretch reads MSRYRFRKAR. The interval 1–25 is disordered; that stretch reads MSRYRFRKARSNWPMGQNDSRWEPP. 2 WD repeats span residues 417–456 and 460–501; these read ACNT…NPMM and GHSN…MLCS.

This is an uncharacterized protein from Caenorhabditis elegans.